We begin with the raw amino-acid sequence, 371 residues long: 4-hydroxy-3-methylbut-2-en-1-yl diphosphate synthase (flavodoxin) (371 aa).

4 residues coordinate [4Fe-4S] cluster: C270, C273, C305, and E312.

The protein belongs to the IspG family. Requires [4Fe-4S] cluster as cofactor.

The enzyme catalyses (2E)-4-hydroxy-3-methylbut-2-enyl diphosphate + oxidized [flavodoxin] + H2O + 2 H(+) = 2-C-methyl-D-erythritol 2,4-cyclic diphosphate + reduced [flavodoxin]. The protein operates within isoprenoid biosynthesis; isopentenyl diphosphate biosynthesis via DXP pathway; isopentenyl diphosphate from 1-deoxy-D-xylulose 5-phosphate: step 5/6. Its function is as follows. Converts 2C-methyl-D-erythritol 2,4-cyclodiphosphate (ME-2,4cPP) into 1-hydroxy-2-methyl-2-(E)-butenyl 4-diphosphate. The protein is 4-hydroxy-3-methylbut-2-en-1-yl diphosphate synthase (flavodoxin) of Psychrobacter arcticus (strain DSM 17307 / VKM B-2377 / 273-4).